The sequence spans 1254 residues: Structural polyprotein (1254 aa).

A necessary for nucleocapsid assembly and virus assembly region spans residues 1-33; it reads MFPFQPMYPMQPMPYRNPFAAPRRPWFPRTDPF. Positions 33-68 are host transcription inhibition; sequence FLAMQVQELTRSMANLTFKQRRDAPPEGPSAKKPKK. Residues 41 to 48 carry the Supraphysiological nuclear export signal motif; the sequence is LTRSMANL. The disordered stretch occupies residues 45-119; sequence MANLTFKQRR…KKPGKRQRMV (75 aa). Residues 64–68 carry the Nuclear localization signal motif; the sequence is KKPKK. The span at 80–92 shows a compositional bias: basic residues; it reads GKKKKNQGKKKAK. Residues 91–127 form a binding to the viral RNA region; that stretch reads AKTGPPNPKAQNGNKKKTNKKPGKRQRMVMKLESDKT. 2 positions are modified to phosphothreonine: T93 and T108. Residues 104 to 118 show a composition bias toward basic residues; that stretch reads NKKKTNKKPGKRQRM. The ribosome-binding stretch occupies residues 112–126; sequence PGKRQRMVMKLESDK. S124 is subject to Phosphoserine. The Peptidase S3 domain occupies 126–275; it reads KTFPIMLEGK…KYTPENCEQW (150 aa). At T127 the chain carries Phosphothreonine. Residues H152, D174, and S226 each act as charge relay system in the active site. Positions 276-287 are functions as an uncleaved signal peptide for the precursor of protein E3/E2; that stretch reads SLVTTMCLLANV. The Extracellular portion of the chain corresponds to 276–701; that stretch reads SLVTTMCLLA…HYYHRYPMST (426 aa). N-linked (GlcNAc...) asparagine; by host glycans are attached at residues N286, N546, and N652. Residues 702–722 form a helical membrane-spanning segment; sequence ILGLSICAAIATVSVAASTWL. The Cytoplasmic portion of the chain corresponds to 723-757; that stretch reads FCRSRVACLTPYRLTPNARIPFCLAVLCCARTARA. S-palmitoyl cysteine; by host attachment occurs at residues C730, C750, and C751. Positions 730 to 750 are transient transmembrane before p62-6K protein processing; the sequence is CLTPYRLTPNARIPFCLAVLC. Topologically, residues 758–772 are extracellular; sequence ETTWESLDHLWNNNQ. The helical transmembrane segment at 773-793 threads the bilayer; sequence QMFWIQLLIPLAALIVVTRLL. The Cytoplasmic portion of the chain corresponds to 794-795; it reads RC. A helical transmembrane segment spans residues 796-816; sequence VCCVVPFLVMAGAAAGAYEHA. Residues 817 to 1224 are Extracellular-facing; that stretch reads TTMPSQAGIS…SKTAWTWLTS (408 aa). Disulfide bonds link C861–C926, C874–C906, C875–C908, and C880–C890. Residues 896–913 are E1 fusion peptide loop; the sequence is VYPFMWGGAYCFCDTENT. N946 carries N-linked (GlcNAc...) asparagine; by host glycosylation. 4 disulfide bridges follow: C1071-C1083, C1113-C1188, C1118-C1192, and C1140-C1182. A helical membrane pass occupies residues 1225–1245; the sequence is LLGGSAVIIIIGLVLATIVAM. The Cytoplasmic portion of the chain corresponds to 1246–1254; that stretch reads YVLTNQKHN.

Homodimer. Homomultimer. Interacts with host karyopherin KPNA4; this interaction allows the nuclear import of the viral capsid protein. Interacts with spike glycoprotein E2. Interacts with host IRAK1; the interaction leads to inhibition of IRAK1-dependent signaling. Part of a tetrameric complex composed of host CRM1, host importin alpha/beta dimer and the viral capsid; this complex blocks the receptor-mediated transport through the nuclear pore. Interacts with host phosphatase PPP1CA; this interaction dephosphorylates the capsid protein, which increases its ability to bind to the viral genome. As to quaternary structure, the precursor of protein E3/E2 and E1 form a heterodimer shortly after synthesis. In terms of assembly, interacts with spike glycoprotein E2. The precursor of protein E3/E2 and E1 form a heterodimer shortly after synthesis. Processing of the precursor of protein E3/E2 into E2 and E3 results in a heterodimer of the spike glycoproteins E2 and E1. Spike at virion surface are constituted of three E2-E1 heterodimers. After target cell attachment and endocytosis, E1 change conformation to form homotrimers. Interacts with 6K protein. Interacts with host LDLRAD3; this interaction mediates viral entry to the host cell. Interacts with spike glycoprotein E1. Processing of the precursor of protein E3/E2 into E2 and E3 results in a heterodimer of the spike glycoproteins E2 and E1. Spike at virion surface are constituted of a trimer of E2-E1 heterodimers. Interacts with 6K protein. Interacts with host LDLRAD3; this interaction mediates viral entry to the host cell. As to quaternary structure, oligomer. Interacts with spike glycoprotein E1. Interacts with spike glycoprotein E2. Structural polyprotein: Specific enzymatic cleavages in vivo yield mature proteins. Capsid protein is auto-cleaved during polyprotein translation, unmasking a signal peptide at the N-terminus of the precursor of E3/E2. The remaining polyprotein is then targeted to the host endoplasmic reticulum, where host signal peptidase cleaves it into pE2, 6K and E1 proteins. pE2 is further processed to mature E3 and E2 by host furin in trans-Golgi vesicle. Post-translationally, palmitoylated via thioester bonds. These palmitoylations may induce disruption of the C-terminus transmembrane. This would result in the reorientation of E2 C-terminus from lumenal to cytoplasmic side. In terms of processing, phosphorylated on serine and threonine residues. N-glycosylated. Post-translationally, palmitoylated via thioester bonds.

It localises to the virion. The protein localises to the host cytoplasm. The protein resides in the host cell membrane. It is found in the host nucleus. Its subcellular location is the virion membrane. The enzyme catalyses Autocatalytic release of the core protein from the N-terminus of the togavirus structural polyprotein by hydrolysis of a -Trp-|-Ser- bond.. Forms an icosahedral capsid with a T=4 symmetry composed of 240 copies of the capsid protein surrounded by a lipid membrane through which penetrate 80 spikes composed of trimers of E1-E2 heterodimers. The capsid protein binds to the viral RNA genome at a site adjacent to a ribosome binding site for viral genome translation following genome release. Possesses a protease activity that results in its autocatalytic cleavage from the nascent structural protein. Following its self-cleavage, the capsid protein transiently associates with ribosomes, and within several minutes the protein binds to viral RNA and rapidly assembles into icosahedric core particles. The resulting nucleocapsid eventually associates with the cytoplasmic domain of the spike glycoprotein E2 at the cell membrane, leading to budding and formation of mature virions. In case of infection, new virions attach to target cells and after clathrin-mediated endocytosis their membrane fuses with the host endosomal membrane. This leads to the release of the nucleocapsid into the cytoplasm, followed by an uncoating event necessary for the genomic RNA to become accessible. The uncoating might be triggered by the interaction of capsid proteins with ribosomes. Binding of ribosomes would release the genomic RNA since the same region is genomic RNA-binding and ribosome-binding. Specifically inhibits interleukin-1 receptor-associated kinase 1/IRAK1-dependent signaling during viral entry, representing a means by which the alphaviruses may evade innate immune detection and activation prior to viral gene expression. Inhibits host transcription. Forms a tetrameric complex with XPO1/CRM1 and the nuclear import receptor importin. This complex blocks the central channel of host nuclear pores thereby inhibiting the receptor-mediated nuclear transport and thus the host mRNA and rRNA transcription. The inhibition of transcription is linked to a cytopathic effect on the host cell. In terms of biological role, provides the signal sequence for the translocation of the precursor of protein E3/E2 to the host endoplasmic reticulum. Furin-cleaved E3 remains associated with spike glycoprotein E1 and mediates pH protection of the latter during the transport via the secretory pathway. After virion release from the host cell, the assembly protein E3 is gradually released in the extracellular space. Its function is as follows. Plays a role in viral attachment to target host cell, by binding to the cell receptor LDLRAD3. Synthesized as a p62 precursor which is processed by furin at the cell membrane just before virion budding, giving rise to E2-E1 heterodimer. The p62-E1 heterodimer is stable, whereas E2-E1 is unstable and dissociate at low pH. p62 is processed at the last step, presumably to avoid E1 fusion activation before its final export to cell surface. E2 C-terminus contains a transitory transmembrane that would be disrupted by palmitoylation, resulting in reorientation of the C-terminal tail from lumenal to cytoplasmic side. This step is critical since E2 C-terminus is involved in budding by interacting with capsid proteins. This release of E2 C-terminus in cytoplasm occurs lately in protein export, and precludes premature assembly of particles at the endoplasmic reticulum membrane. Functionally, acts as a viroporin that participates in virus glycoprotein processing and transport to the plasma membrane, cell permeabilization and budding of viral particles. Disrupts the calcium homeostasis of the cell, probably at the endoplasmic reticulum level. This leads to cytoplasmic calcium elevation. Because of its lipophilic properties, the 6K protein is postulated to influence the selection of lipids that interact with the transmembrane domains of the glycoproteins, which, in turn, affects the deformability of the bilayer required for the extreme curvature that occurs as budding proceeds. Present in low amount in virions, about 3% compared to viral glycoproteins. Class II viral fusion protein. Fusion activity is inactive as long as E1 is bound to E2 in mature virion. After virus attachment to cell receptor LDLRAD3 and endocytosis, acidification of the endosome would induce dissociation of E1/E2 heterodimer and concomitant trimerization of the E1 subunits. This E1 trimer is fusion active, and promotes release of viral nucleocapsid in cytoplasm after endosome and viral membrane fusion. Efficient fusion requires the presence of cholesterol and sphingolipid in the target membrane. Fusion is optimal at levels of about 1 molecule of cholesterol per 2 molecules of phospholipids, and is specific for sterols containing a 3-beta-hydroxyl group. This Bos taurus (Bovine) protein is Structural polyprotein.